A 58-amino-acid chain; its full sequence is UPF0337 protein CE1672 (58 aa).

Basic and acidic residues predominate over residues 1-39 (MGLGDKIRNTAEKASGKVKEATGKATDNEKLEAEGKTDQ). Residues 1–58 (MGLGDKIRNTAEKASGKVKEATGKATDNEKLEAEGKTDQFKGNAKNTVENAKDTLRGN) form a disordered region.

The protein belongs to the UPF0337 (CsbD) family.

This chain is UPF0337 protein CE1672, found in Corynebacterium efficiens (strain DSM 44549 / YS-314 / AJ 12310 / JCM 11189 / NBRC 100395).